A 144-amino-acid polypeptide reads, in one-letter code: Glutamyl-tRNA(Gln) amidotransferase subunit C, mitochondrial (144 aa).

The transit peptide at M1–F17 directs the protein to the mitochondrion.

Belongs to the GatC family. In terms of assembly, subunit of the heterotrimeric GatCAB amidotransferase (AdT) complex, composed of A, B and C subunits.

The protein resides in the mitochondrion. It catalyses the reaction L-glutamyl-tRNA(Gln) + L-glutamine + ATP + H2O = L-glutaminyl-tRNA(Gln) + L-glutamate + ADP + phosphate + H(+). Functionally, allows the formation of correctly charged Gln-tRNA(Gln) through the transamidation of misacylated Glu-tRNA(Gln) in the mitochondria. The reaction takes place in the presence of glutamine and ATP through an activated gamma-phospho-Glu-tRNA(Gln). This Ixodes scapularis (Black-legged tick) protein is Glutamyl-tRNA(Gln) amidotransferase subunit C, mitochondrial.